The following is a 487-amino-acid chain: Putative sugar kinase YoaC (487 aa).

It belongs to the FGGY kinase family.

This is Putative sugar kinase YoaC (yoaC) from Bacillus subtilis (strain 168).